A 395-amino-acid chain; its full sequence is Elongation factor Tu (395 aa).

Residues 10–204 (KPHVNIGTIG…VVDEYIPTPV (195 aa)) form the tr-type G domain. The interval 19 to 26 (GHVDHGKT) is G1. A GTP-binding site is contributed by 19–26 (GHVDHGKT). Position 26 (threonine 26) interacts with Mg(2+). The G2 stretch occupies residues 60–64 (GITIN). Residues 81 to 84 (DAPG) are G3. GTP contacts are provided by residues 81 to 85 (DAPGH) and 136 to 139 (NKTD). A G4 region spans residues 136–139 (NKTD). A G5 region spans residues 174-176 (SAL).

This sequence belongs to the TRAFAC class translation factor GTPase superfamily. Classic translation factor GTPase family. EF-Tu/EF-1A subfamily. In terms of assembly, monomer.

It localises to the cytoplasm. It catalyses the reaction GTP + H2O = GDP + phosphate + H(+). Its function is as follows. GTP hydrolase that promotes the GTP-dependent binding of aminoacyl-tRNA to the A-site of ribosomes during protein biosynthesis. This Lactiplantibacillus plantarum (strain ATCC BAA-793 / NCIMB 8826 / WCFS1) (Lactobacillus plantarum) protein is Elongation factor Tu.